The following is a 205-amino-acid chain: Imidazole glycerol phosphate synthase subunit HisH (205 aa).

The Glutamine amidotransferase type-1 domain maps to Met-1 to Gly-205. The Nucleophile role is filled by Cys-79. Active-site residues include His-186 and Glu-188.

Heterodimer of HisH and HisF.

Its subcellular location is the cytoplasm. The enzyme catalyses 5-[(5-phospho-1-deoxy-D-ribulos-1-ylimino)methylamino]-1-(5-phospho-beta-D-ribosyl)imidazole-4-carboxamide + L-glutamine = D-erythro-1-(imidazol-4-yl)glycerol 3-phosphate + 5-amino-1-(5-phospho-beta-D-ribosyl)imidazole-4-carboxamide + L-glutamate + H(+). It carries out the reaction L-glutamine + H2O = L-glutamate + NH4(+). It functions in the pathway amino-acid biosynthesis; L-histidine biosynthesis; L-histidine from 5-phospho-alpha-D-ribose 1-diphosphate: step 5/9. Functionally, IGPS catalyzes the conversion of PRFAR and glutamine to IGP, AICAR and glutamate. The HisH subunit catalyzes the hydrolysis of glutamine to glutamate and ammonia as part of the synthesis of IGP and AICAR. The resulting ammonia molecule is channeled to the active site of HisF. The protein is Imidazole glycerol phosphate synthase subunit HisH of Wolinella succinogenes (strain ATCC 29543 / DSM 1740 / CCUG 13145 / JCM 31913 / LMG 7466 / NCTC 11488 / FDC 602W) (Vibrio succinogenes).